Consider the following 205-residue polypeptide: CD83 antigen (205 aa).

A signal peptide spans 1 to 19 (MSRGLQLLLLSCAYSLAPA). In terms of domain architecture, Ig-like V-type spans 20–114 (TPEVKVACSE…YRCTLQDPDG (95 aa)). Over 20–144 (TPEVKVACSE…EETFKKYRAE (125 aa)) the chain is Extracellular. A disulfide bridge connects residues Cys35 and Cys107. A compositionally biased stretch (basic and acidic residues) spans 60-69 (METPQEDHLR). Positions 60-81 (METPQEDHLRGQHYHQKGQNGS) are disordered. N-linked (GlcNAc...) asparagine glycans are attached at residues Asn79, Asn96, and Asn117. Residues 145-166 (IVLLLALVIFYLTLIIFTCKFA) form a helical membrane-spanning segment. Residues 167-205 (RLQSIFPDFSKAGMERAFLPVTSPNKHLGLVTPHKTELV) lie on the Cytoplasmic side of the membrane.

Monomer. Homodimer. Homotrimer. Interacts with MARCHF1; this interaction antagonizes MARCHF1-mediated MHC II and CD86 down-regulation. Glycosylated when expressed on activated dendritic cells. As to expression, expressed by activated lymphocytes, Langerhans cells and activatd dendritic cells.

The protein localises to the membrane. Its function is as follows. Transmembrane glycoprotein predominantly found on the surface of many immune cells including dendritic cells or lymphocytes that plays various roles in immune response regulation. Plays an essential role in CD4(+) T-selection, differentiation and stability by regulating the activity of the major E3 ubiquitin ligase responsible for controlling MHCII trafficking MARCHF8. Also inhibits MARCHF1 association with MHCII or CD86 to prevent their ubiquitination and subsequent degradation. In addition, acts as an important modulator of protective responses against acute infections. This is CD83 antigen (CD83) from Homo sapiens (Human).